Here is a 91-residue protein sequence, read N- to C-terminus: Small ribosomal subunit protein uS17 (91 aa).

This sequence belongs to the universal ribosomal protein uS17 family. Part of the 30S ribosomal subunit.

Functionally, one of the primary rRNA binding proteins, it binds specifically to the 5'-end of 16S ribosomal RNA. In Salinispora arenicola (strain CNS-205), this protein is Small ribosomal subunit protein uS17.